The sequence spans 250 residues: Formylaminopyrimidine transport permease protein ThiX (250 aa).

Helical transmembrane passes span 5–25 (YQAL…EISA), 62–82 (IISI…LLMF), 94–114 (LLVA…VLWF), 115–135 (GYSI…PITV), 172–192 (LPSF…GAAV), and 216–236 (PGVF…FAAI). The 182-residue stretch at 56-237 (LPATLAIISI…LGILGFAAIK (182 aa)) folds into the ABC transmembrane type-1 domain.

It belongs to the binding-protein-dependent transport system permease family. The complex is likely composed of an ATP-binding protein (ThiZ), a transmembrane protein (ThiX) and a solute-binding protein (ThiY).

The protein localises to the cell membrane. It functions in the pathway cofactor biosynthesis; thiamine diphosphate biosynthesis. Its function is as follows. Participates in a thiamine pyrimidine salvage pathway as part of the ABC transporter complex ThiXYZ involved in the import of thiamine degradation products such as the formylaminopyrimidine N-formyl-4-amino-5-aminomethyl-2-methylpyrimidine (FAMP). Is probably responsible for the translocation of the substrate across the membrane. This chain is Formylaminopyrimidine transport permease protein ThiX, found in Halalkalibacterium halodurans (strain ATCC BAA-125 / DSM 18197 / FERM 7344 / JCM 9153 / C-125) (Bacillus halodurans).